We begin with the raw amino-acid sequence, 488 residues long: Probable Xaa-Pro aminopeptidase ATEG_00858 (488 aa).

Mn(2+)-binding residues include D273, D284, E417, and E456.

This sequence belongs to the peptidase M24B family. Requires Mn(2+) as cofactor.

It carries out the reaction Release of any N-terminal amino acid, including proline, that is linked to proline, even from a dipeptide or tripeptide.. In terms of biological role, catalyzes the removal of a penultimate prolyl residue from the N-termini of peptides. The protein is Probable Xaa-Pro aminopeptidase ATEG_00858 of Aspergillus terreus (strain NIH 2624 / FGSC A1156).